Consider the following 341-residue polypeptide: Methionine import ATP-binding protein MetN 2 (341 aa).

Residues 2–241 (IEASELTKVY…PKAPLTQEFI (240 aa)) form the ABC transporter domain. Residue 38–45 (GYSGAGKS) participates in ATP binding.

The protein belongs to the ABC transporter superfamily. Methionine importer (TC 3.A.1.24) family. The complex is composed of two ATP-binding proteins (MetN), two transmembrane proteins (MetI) and a solute-binding protein (MetQ).

It localises to the cell membrane. It catalyses the reaction L-methionine(out) + ATP + H2O = L-methionine(in) + ADP + phosphate + H(+). The enzyme catalyses D-methionine(out) + ATP + H2O = D-methionine(in) + ADP + phosphate + H(+). Its function is as follows. Part of the ABC transporter complex MetNIQ involved in methionine import. Responsible for energy coupling to the transport system. This is Methionine import ATP-binding protein MetN 2 from Shouchella clausii (strain KSM-K16) (Alkalihalobacillus clausii).